The primary structure comprises 311 residues: ADP-ribosyl cyclase/cyclic ADP-ribose hydrolase 2 (311 aa).

The signal sequence occupies residues 1-24 (MAVQGGLLSLWLWLWLSLLTVLLG). Disulfide bonds link cysteine 46/cysteine 60, cysteine 76/cysteine 156, and cysteine 137/cysteine 150. 2 N-linked (GlcNAc...) asparagine glycosylation sites follow: asparagine 59 and asparagine 88. Tryptophan 102 contributes to the NAD(+) binding site. Tryptophan 102 is a nicotinamide binding site. N-linked (GlcNAc...) asparagine glycosylation is present at asparagine 141. Tryptophan 165 serves as a coordination point for NAD(+). Asparagine 185 carries N-linked (GlcNAc...) asparagine glycosylation. Glutamate 203 serves as a coordination point for NAD(+). Intrachain disulfides connect cysteine 231–cysteine 252 and cysteine 264–cysteine 273. Serine 286 carries GPI-anchor amidated serine lipidation. A propeptide spanning residues 287–311 (ASLHAIGDASLLISLLVALASSSQA) is cleaved from the precursor.

It belongs to the ADP-ribosyl cyclase family. As to quaternary structure, homodimer. Expressed in the bone marrow, spleen and thymus in lymphoid organs, and the lung, kidney and heart in non-lymphoid organs.

It localises to the cell membrane. The catalysed reaction is NAD(+) + H2O = ADP-D-ribose + nicotinamide + H(+). It carries out the reaction NAD(+) = cyclic ADP-beta-D-ribose + nicotinamide + H(+). It catalyses the reaction cyclic ADP-beta-D-ribose + H2O = ADP-D-ribose. Catalyzes both the synthesis of cyclic ADP-beta-D-ribose (cADPR) from NAD(+), and its hydrolysis to ADP-D-ribose (ADPR). Cyclic ADPR is known to serve as an endogenous second messenger that elicits calcium release from intracellular stores, and thus regulates the mobilization of intracellular calcium. May be involved in pre-B-cell growth. The chain is ADP-ribosyl cyclase/cyclic ADP-ribose hydrolase 2 (Bst1) from Mus musculus (Mouse).